We begin with the raw amino-acid sequence, 186 residues long: Large ribosomal subunit protein uL5 (186 aa).

Belongs to the universal ribosomal protein uL5 family. Part of the 50S ribosomal subunit; part of the 5S rRNA/L5/L18/L25 subcomplex. Contacts the 5S rRNA and the P site tRNA. Forms a bridge to the 30S subunit in the 70S ribosome.

This is one of the proteins that bind and probably mediate the attachment of the 5S RNA into the large ribosomal subunit, where it forms part of the central protuberance. In the 70S ribosome it contacts protein S13 of the 30S subunit (bridge B1b), connecting the 2 subunits; this bridge is implicated in subunit movement. Contacts the P site tRNA; the 5S rRNA and some of its associated proteins might help stabilize positioning of ribosome-bound tRNAs. The sequence is that of Large ribosomal subunit protein uL5 from Legionella pneumophila subsp. pneumophila (strain Philadelphia 1 / ATCC 33152 / DSM 7513).